The sequence spans 244 residues: Putative B3 domain-containing protein At2g31460 (244 aa).

A DNA-binding region (TF-B3) is located at residues 49–147; the sequence is SSMHMENSGF…PVHDGVNLSG (99 aa). Disordered regions lie at residues 175 to 196 and 217 to 244; these read DGNLPQDSGHDGHNDNLPQDSV and DSQGYLPDEDEDFGFNDDGSIRDSGHYQ. A compositionally biased stretch (basic and acidic residues) spans 235 to 244; the sequence is GSIRDSGHYQ.

It localises to the nucleus. The chain is Putative B3 domain-containing protein At2g31460 from Arabidopsis thaliana (Mouse-ear cress).